Reading from the N-terminus, the 262-residue chain is Acyl-coenzyme A diphosphatase FITM2 (262 aa).

Over 1–23 (MEHLERCAWVLRGTLVRSAVRKY) the chain is Cytoplasmic. A helical membrane pass occupies residues 24–44 (LPWALAASMLAGSLLKELSPL). Residues 45–57 (PESYLSNKRNVLN) are Lumenal-facing. Residues 58–78 (VYFVKVAWAWTFCLLLPFIAL) traverse the membrane as a helical segment. At 79-93 (TNYHLTGKAGLVLRR) the chain is on the cytoplasmic side. Residues 94–114 (LSTLLVGTAIWYVCTAIFSNI) traverse the membrane as a helical segment. The Lumenal portion of the chain corresponds to 115 to 145 (EHYTGSCYQSPALEGERKEHQSKQQCHGEGG). The chain crosses the membrane as a helical span at residues 146–166 (FWHGFDISGHSFLLTFCALMI). His155 is a catalytic residue. Over 167–190 (VEEMAVLHEVKTDRNHCLHAAITT) the chain is Cytoplasmic. A helical transmembrane segment spans residues 191–211 (LVVALGFLTFIWVWMFLCTAV). Over 212–218 (YFHNLSQ) the chain is Lumenal. The active site involves His214. The chain crosses the membrane as a helical span at residues 219 to 239 (KVFGTLFGLLGWYGTYGCWYL). Topologically, residues 240 to 262 (KSFSPGLPPQSSSLNLKQDTYKK) are cytoplasmic.

This sequence belongs to the FIT family. FIT2 subfamily.

It localises to the endoplasmic reticulum membrane. The enzyme catalyses an acyl-CoA + H2O = an acyl-4'-phosphopantetheine + adenosine 3',5'-bisphosphate + 2 H(+). The catalysed reaction is (9Z)-octadecenoyl-CoA + H2O = S-(9Z-octadecenoyl)-4'-phosphopantetheine + adenosine 3',5'-bisphosphate + 2 H(+). It catalyses the reaction (5Z,8Z,11Z,14Z)-eicosatetraenoyl-CoA + H2O = S-(5Z,8Z,11Z,14Z-eicosatetraenoyl)-4'-phosphopantetheine + adenosine 3',5'-bisphosphate + 2 H(+). It carries out the reaction hexadecanoyl-CoA + H2O = S-hexadecanoyl-4'-phosphopantetheine + adenosine 3',5'-bisphosphate + 2 H(+). In terms of biological role, fatty acyl-coenzyme A (CoA) diphosphatase that hydrolyzes fatty acyl-CoA to yield acyl-4'-phosphopantetheine and adenosine 3',5'-bisphosphate. Preferentially hydrolyzes unsaturated long-chain acyl-CoA substrates such as oleoyl-CoA/(9Z)-octadecenoyl-CoA and arachidonoyl-CoA/(5Z,8Z,11Z,14Z)-eicosatetraenoyl-CoA in the endoplasmic reticulum (ER) lumen. This catalytic activity is required for maintaining ER structure and for lipid droplets (LDs) biogenesis, which are lipid storage organelles involved in maintaining lipid and energy homeostasis. Directly binds to diacylglycerol (DAGs) and triacylglycerol, which is also important for LD biogenesis. May support directional budding of nacent LDs from the ER into the cytosol by reducing DAG levels at sites of LD formation. Plays a role in the regulation of cell morphology and cytoskeletal organization. The polypeptide is Acyl-coenzyme A diphosphatase FITM2 (Bos taurus (Bovine)).